The following is a 30-amino-acid chain: Cycloviolacin-O7 (30 aa).

The segment at residues Ser1–Asn30 is a cross-link (cyclopeptide (Ser-Asn)). Cystine bridges form between Cys4/Cys21, Cys8/Cys23, and Cys13/Cys28.

In terms of processing, this is a cyclic peptide.

Probably participates in a plant defense mechanism. This is Cycloviolacin-O7 from Viola odorata (Sweet violet).